A 387-amino-acid chain; its full sequence is Radial spoke protein 14 (387 aa).

8 ARM repeats span residues 24 to 67 (KALP…ELLS), 69 to 109 (PVNH…LLAA), 111 to 150 (EVGA…EAAR), 154 to 198 (TRRA…TCTQ), 204 to 244 (GILS…ALAT), 245 to 286 (REDA…AITI), 289 to 328 (EGKY…NVAE), and 330 to 370 (PEAR…QCRF).

The protein belongs to the flagellar radial spoke RSP14 family.

The protein localises to the cytoplasm. Its subcellular location is the cytoskeleton. It is found in the flagellum axoneme. This chain is Radial spoke protein 14 (RSP14), found in Chlamydomonas reinhardtii (Chlamydomonas smithii).